Reading from the N-terminus, the 86-residue chain is MKTLLLTLVVLTIACLDLGYTKTCFNDDLTNPKTTELCRHSMYFCFKNSWIAGGVERIERGCSLTCPDIKYNGKYIYCCTRDNCNA.

The first 21 residues, methionine 1 to threonine 21, serve as a signal peptide directing secretion. 4 disulfide bridges follow: cysteine 24–cysteine 45, cysteine 38–cysteine 62, cysteine 66–cysteine 78, and cysteine 79–cysteine 84.

Belongs to the three-finger toxin family. Short-chain subfamily. Orphan group IX sub-subfamily. As to expression, expressed by the venom gland.

It is found in the secreted. The polypeptide is Neurotoxin-like protein pMD18-NTL1/2/4/5 (Bungarus multicinctus (Many-banded krait)).